The primary structure comprises 161 residues: Low molecular weight phosphotyrosine protein phosphatase (161 aa).

C14 (nucleophile) is an active-site residue. The active-site Transition state stabilizer is the R20. S57 is subject to Phosphoserine. D133 (proton donor) is an active-site residue.

Belongs to the low molecular weight phosphotyrosine protein phosphatase family.

The protein localises to the cytoplasm. The enzyme catalyses O-phospho-L-tyrosyl-[protein] + H2O = L-tyrosyl-[protein] + phosphate. The catalysed reaction is a phosphate monoester + H2O = an alcohol + phosphate. In terms of biological role, acts on tyrosine phosphorylated proteins, low-MW aryl phosphates and natural and synthetic acyl phosphates. This is Low molecular weight phosphotyrosine protein phosphatase from Saccharomyces cerevisiae (strain ATCC 204508 / S288c) (Baker's yeast).